Reading from the N-terminus, the 337-residue chain is DNA-directed RNA polymerase subunit alpha (337 aa).

The segment at M1–A232 is alpha N-terminal domain (alpha-NTD). Residues E266–F337 form an alpha C-terminal domain (alpha-CTD) region.

This sequence belongs to the RNA polymerase alpha chain family. In terms of assembly, in plastids the minimal PEP RNA polymerase catalytic core is composed of four subunits: alpha, beta, beta', and beta''. When a (nuclear-encoded) sigma factor is associated with the core the holoenzyme is formed, which can initiate transcription.

The protein resides in the plastid. Its subcellular location is the chloroplast. The enzyme catalyses RNA(n) + a ribonucleoside 5'-triphosphate = RNA(n+1) + diphosphate. Functionally, DNA-dependent RNA polymerase catalyzes the transcription of DNA into RNA using the four ribonucleoside triphosphates as substrates. In Buxus microphylla (Littleleaf boxwood), this protein is DNA-directed RNA polymerase subunit alpha.